We begin with the raw amino-acid sequence, 259 residues long: Probable WRKY transcription factor 65 (259 aa).

The span at 1–17 (MKRGLDMARSYNDHESS) shows a compositional bias: basic and acidic residues. 2 disordered regions span residues 1-101 (MKRG…RCSS) and 126-165 (TSEHNHPWPLTSSTRNGPKPKPEPKPEPEPEVEPEAEEED). A compositionally biased stretch (polar residues) spans 18-31 (QETGPESPNSSTFN). Residues 47 to 69 (RSVEKRVVNVPMKEMEGSRHKGD) show a composition bias toward basic and acidic residues. The segment at residues 68 to 134 (GDTTPPSDSW…YTSEHNHPWP (67 aa)) is a DNA-binding region (WRKY). The segment covering 154–165 (EPEVEPEAEEED) has biased composition (acidic residues).

It is found in the nucleus. In terms of biological role, transcription factor. Interacts specifically with the W box (5'-(T)TGAC[CT]-3'), a frequently occurring elicitor-responsive cis-acting element. This Arabidopsis thaliana (Mouse-ear cress) protein is Probable WRKY transcription factor 65 (WRKY65).